A 570-amino-acid polypeptide reads, in one-letter code: Ribosome-inactivating protein SNAI (570 aa).

The N-terminal stretch at 1–28 (MRLVAKLLYLAVLAICGLGIHGALTHPR) is a signal peptide. N40, N62, and N144 each carry an N-linked (GlcNAc...) asparagine glycan. E199 is an active-site residue. N260 carries N-linked (GlcNAc...) asparagine glycosylation. 3 cysteine pairs are disulfide-bonded: C284–C316, C332–C351, and C373–C385. Ricin B-type lectin domains are found at residues 319 to 439 (VEVT…WTVG) and 441 to 566 (VEPL…WITT). One copy of the 1-alpha repeat lies at 329-369 (DGLCVDVRYGHYIDGNPVQLRPCGNECNQLWTFRTDGTIRW). Residues 370 to 405 (LGKCLTASSSVMIYDCNTVPPEATKWVVSIDGTITN) form a 1-beta repeat. A 1-gamma repeat occupies 408–440 (SGLVLTAPQAAEGTALSLENNIHAARQGWTVGD). The 2-alpha repeat unit spans residues 452–489 (KQMCLRENGENNFVWLEDCVLNRVQQEWALYGDGTIRV). A disulfide bridge connects residues C455 and C470. N492 carries an N-linked (GlcNAc...) asparagine glycan. The stretch at 493-531 (RSLCVTSEDHEPSDLIVILKCEGSGNQRWVFNTNGTISN) is one 2-beta repeat. A disulfide bridge connects residues C496 and C513. N-linked (GlcNAc...) asparagine glycosylation occurs at N526. Residues 534-567 (AKLLMDVAQRDVSLRKIILYRPTGNPNQQWITTT) form a 2-gamma repeat.

The protein belongs to the ribosome-inactivating protein family. Type 2 RIP subfamily. In terms of assembly, tetramer of four pairs of disulfide bound A-B chains. In terms of processing, the precursor is processed in two chains, A and B, that are linked by a disulfide bond. A small truncated form corresponding roughly to the second ricin B-type lectin domain of the B chain, TrSNAI, can also be produced. Post-translationally, glycosylated. N-glycans of subunit A are (Man)2-3(Xyl)(GlcNAc)2(Fuc) at Asn-40, (GlcNAc)0-2(Man)3(Xyl)(GlcNAc)2(Fuc) or (Man)1-2(GlcNAc)2 at Asn-62, (Man)3(Xyl)(GlcNAc)2(Fuc)0-1 at Asn-144 and (GlcNAc)0-1(Man)3(Xyl)(GlcNAc)2(Fuc) at Asn-260. N-glycans of subunit B are (Man)3(Xyl)(GlcNAc)2(Fuc) at Asn-492 and (Man)6-9(GlcNAc)2 at Asn-526. In terms of tissue distribution, expressed in bark.

It carries out the reaction Endohydrolysis of the N-glycosidic bond at one specific adenosine on the 28S rRNA.. In terms of biological role, neu5Ac(alpha2-6)Gal/GalNAc specific agglutinin. Behaves as a type-2 ribosome-inactivating protein. Strongly inhibits mammalian but not plant ribosomes. The A chain is responsible for inhibiting protein synthesis through the catalytic inactivation of 60S ribosomal subunits by removing adenine from position 4,324 of 28S rRNA. The B chain binds to cell receptors and probably facilitates the entry into the cell of the A chain; B chains are also responsible for cell agglutination (lectin activity). Involved in plant defense against insects. Its function is as follows. Binds Neu5Ac(alpha2-6)Gal/GalNAc but has no clear agglutination activity. The protein is Ribosome-inactivating protein SNAI of Sambucus nigra (European elder).